We begin with the raw amino-acid sequence, 167 residues long: Periplasmic nitrate reductase, electron transfer subunit (167 aa).

Residues 1–34 (MRRAHRAGERVMMKRFGIALLAVAIAAGASSLTA) form the signal peptide. The disordered stretch occupies residues 40–65 (GLHGPAPLNDEGPAPPMLPNRNTSER). 8 residues coordinate heme c: His79, Cys93, Cys96, His97, His114, Cys133, Cys136, and His137.

It belongs to the NapB family. Component of the periplasmic nitrate reductase NapAB complex composed of NapA and NapB. Post-translationally, binds 2 heme C groups per subunit.

The protein localises to the periplasm. Its function is as follows. Electron transfer subunit of the periplasmic nitrate reductase complex NapAB. Receives electrons from the membrane-anchored tetraheme c-type NapC protein and transfers these to NapA subunit, thus allowing electron flow between membrane and periplasm. Essential for periplasmic nitrate reduction with nitrate as the terminal electron acceptor. In Bradyrhizobium japonicum, this protein is Periplasmic nitrate reductase, electron transfer subunit.